The sequence spans 362 residues: UDP-N-acetylglucosamine--N-acetylmuramyl-(pentapeptide) pyrophosphoryl-undecaprenol N-acetylglucosamine transferase (362 aa).

UDP-N-acetyl-alpha-D-glucosamine-binding positions include 15–17 (TGG), asparagine 127, arginine 165, serine 191, isoleucine 247, 266–271 (ALTVSE), and glutamine 292.

The protein belongs to the glycosyltransferase 28 family. MurG subfamily.

The protein resides in the cell inner membrane. The enzyme catalyses di-trans,octa-cis-undecaprenyl diphospho-N-acetyl-alpha-D-muramoyl-L-alanyl-D-glutamyl-meso-2,6-diaminopimeloyl-D-alanyl-D-alanine + UDP-N-acetyl-alpha-D-glucosamine = di-trans,octa-cis-undecaprenyl diphospho-[N-acetyl-alpha-D-glucosaminyl-(1-&gt;4)]-N-acetyl-alpha-D-muramoyl-L-alanyl-D-glutamyl-meso-2,6-diaminopimeloyl-D-alanyl-D-alanine + UDP + H(+). It participates in cell wall biogenesis; peptidoglycan biosynthesis. Cell wall formation. Catalyzes the transfer of a GlcNAc subunit on undecaprenyl-pyrophosphoryl-MurNAc-pentapeptide (lipid intermediate I) to form undecaprenyl-pyrophosphoryl-MurNAc-(pentapeptide)GlcNAc (lipid intermediate II). This is UDP-N-acetylglucosamine--N-acetylmuramyl-(pentapeptide) pyrophosphoryl-undecaprenol N-acetylglucosamine transferase from Shewanella sp. (strain MR-4).